The following is a 112-amino-acid chain: Nitrogen regulatory protein P-II (112 aa).

Residue Y51 is modified to O-UMP-tyrosine.

It belongs to the P(II) protein family. In terms of assembly, homotrimer.

Its function is as follows. In nitrogen-limiting conditions, when the ratio of Gln to 2-ketoglutarate decreases, P-II is uridylylated to P-II-UMP. P-II-UMP allows the deadenylation of glutamine synthetase (GS), thus activating the enzyme. Conversely, in nitrogen excess P-II is deuridylated and promotes the adenylation of GS. P-II indirectly controls the transcription of the GS gene (glnA). P-II prevents NR-II-catalyzed conversion of NR-I to NR-I-phosphate, the transcriptional activator of glnA. When P-II is uridylylated to P-II-UMP, these events are reversed. This chain is Nitrogen regulatory protein P-II (glnB), found in Aquifex aeolicus (strain VF5).